A 1288-amino-acid polypeptide reads, in one-letter code: Contactin-associated protein-like 3 (1288 aa).

The first 25 residues, 1 to 25 (MASVAWAVLKVLLLLPTQTWSPVGA), serve as a signal peptide directing secretion. Residues 26–1245 (GNPPDCDAPL…LVNADRRDSA (1220 aa)) lie on the Extracellular side of the membrane. The 147-residue stretch at 31 to 177 (CDAPLASALP…IGMRIEVYGC (147 aa)) folds into the F5/8 type C domain. Cys-31 and Cys-177 are joined by a disulfide. Laminin G-like domains lie at 183–364 (VVYF…SFSC) and 370–545 (VPVT…IDSC). Asn-285, Asn-359, Asn-441, and Asn-497 each carry an N-linked (GlcNAc...) asparagine glycan. Cys-332 and Cys-364 are joined by a disulfide. Cystine bridges form between Cys-513–Cys-545, Cys-551–Cys-562, Cys-556–Cys-571, and Cys-573–Cys-583. Positions 551–583 (CLPSYCEHGGECSQSWDTFSCDCLGTGYTGETC) constitute an EGF-like 1 domain. Residues 584-792 (HSSLYEQSCE…LLCRGDQSFW (209 aa)) enclose the Fibrinogen C-terminal domain. 2 N-linked (GlcNAc...) asparagine glycosylation sites follow: Asn-623 and Asn-706. One can recognise a Laminin G-like 3 domain in the interval 793–958 (NSASFNTETS…TVTPGVEPGC (166 aa)). Intrachain disulfides connect Cys-931-Cys-958, Cys-962-Cys-975, Cys-969-Cys-984, and Cys-986-Cys-996. In terms of domain architecture, EGF-like 2 spans 962–996 (CSTYGHLCRNGGRCREKRRGVTCDCAFSAYDGPFC). The 189-residue stretch at 1015 to 1203 (QEHYTLSENS…RGHVAPMARC (189 aa)) folds into the Laminin G-like 4 domain. N-linked (GlcNAc...) asparagine glycans are attached at residues Asn-1023, Asn-1073, and Asn-1120. Cys-1167 and Cys-1203 are joined by a disulfide. Positions 1215 to 1236 (ELAPRLAGGAGRSGPADEGEPL) are disordered. Residues 1246-1266 (VIGGVIAVVIFILLCITAIAI) traverse the membrane as a helical segment. Residues 1267 to 1288 (RIYQQRKLRKENESKVSKKEEC) are Cytoplasmic-facing.

It belongs to the neurexin family.

Its subcellular location is the cell membrane. The protein resides in the secreted. In Homo sapiens (Human), this protein is Contactin-associated protein-like 3 (CNTNAP3).